A 616-amino-acid polypeptide reads, in one-letter code: Sulfite reductase [NADPH] flavoprotein alpha-component (616 aa).

Positions Leu-80–Leu-218 constitute a Flavodoxin-like domain. Residues Ser-86–Ala-91, Ser-133–Gly-136, and Leu-169–Cys-178 contribute to the FMN site. Residues Gln-251–Pro-465 form the FAD-binding FR-type domain. Residues Thr-339, Gly-373, Arg-403 to Ser-406, Thr-421 to Gly-423, Tyr-427, and Gly-436 to Ser-439 contribute to the FAD site. Residues Ser-536 to Arg-537, Lys-542 to Gln-546, and Asp-578 contribute to the NADP(+) site. Position 616 (Tyr-616) interacts with FAD.

Belongs to the NADPH-dependent sulphite reductase flavoprotein subunit CysJ family. It in the N-terminal section; belongs to the flavodoxin family. This sequence in the C-terminal section; belongs to the flavoprotein pyridine nucleotide cytochrome reductase family. Alpha(8)-beta(8). The alpha component is a flavoprotein, the beta component is a hemoprotein. FAD serves as cofactor. Requires FMN as cofactor.

The enzyme catalyses hydrogen sulfide + 3 NADP(+) + 3 H2O = sulfite + 3 NADPH + 4 H(+). It participates in sulfur metabolism; hydrogen sulfide biosynthesis; hydrogen sulfide from sulfite (NADPH route): step 1/1. Functionally, component of the sulfite reductase complex that catalyzes the 6-electron reduction of sulfite to sulfide. This is one of several activities required for the biosynthesis of L-cysteine from sulfate. The flavoprotein component catalyzes the electron flow from NADPH -&gt; FAD -&gt; FMN to the hemoprotein component. The protein is Sulfite reductase [NADPH] flavoprotein alpha-component of Vibrio vulnificus (strain CMCP6).